The primary structure comprises 60 residues: Bacteriochlorophyll c-binding protein (60 aa).

Methionine 1 is modified (N-formylmethionine). Residue histidine 25 participates in a bacteriochlorophyll c binding.

This sequence belongs to the BChl C/E-binding protein family.

The protein localises to the chlorosome. The protein resides in the chlorosome envelope. Component of the photosynthetic apparatus. The light harvesting B740 complex binds bacteriochlorophyll c. The chain is Bacteriochlorophyll c-binding protein (csmA) from Pelodictyon luteolum.